Consider the following 525-residue polypeptide: Ribosomal protein S6 kinase beta-1 (525 aa).

The TOS motif motif lies at 28-32 (FDIDL). Positions 32–46 (LDQPEDAGSEDELEE) are enriched in acidic residues. The tract at residues 32 to 54 (LDQPEDAGSEDELEEGGQLNESM) is disordered. In terms of domain architecture, Protein kinase spans 91 to 352 (FELLRVLGKG…AGEVQAHPFF (262 aa)). Residues 97 to 105 (LGKGGYGKV) and K123 contribute to the ATP site. The active-site Proton acceptor is D218. Position 252 is a phosphothreonine; by PDPK1 (T252). In terms of domain architecture, AGC-kinase C-terminal spans 353-423 (RHINWEELLA…VAPSVLESVK (71 aa)). Positions 380–399 (SQFDSKFTRQTPVDSPDDST) are disordered. A compositionally biased stretch (polar residues) spans 381–399 (QFDSKFTRQTPVDSPDDST). S394 carries the phosphoserine modification. T412 bears the Phosphothreonine; by MTOR, NEK6 and NEK7 mark. The tract at residues 424–525 (EKFSFEPKIR…KRPEHLRMNL (102 aa)) is autoinhibitory domain. 2 positions are modified to phosphoserine: S434 and S441. T444 is subject to Phosphothreonine. Residues S447 and S452 each carry the phosphoserine modification. K516 is subject to N6-acetyllysine.

It belongs to the protein kinase superfamily. AGC Ser/Thr protein kinase family. S6 kinase subfamily. In terms of assembly, interacts with PPP1R9A/neurabin-1. Interacts with RPTOR. Interacts with IRS1. Interacts with EIF3B and EIF3C. Interacts with TRAF4. Interacts with POLDIP3. Interacts (via N-terminus) with IER5. Phosphorylation at Thr-412 is regulated by mTORC1. The phosphorylation at this site is maintained by an agonist-dependent autophosphorylation mechanism. Activated by phosphorylation at Thr-252 by PDPK1. Dephosphorylation by PPP1CC at Thr-412 in mitochondrion.

It localises to the cytoplasm. The protein localises to the synapse. The protein resides in the synaptosome. It is found in the mitochondrion outer membrane. Its subcellular location is the mitochondrion. The catalysed reaction is L-seryl-[protein] + ATP = O-phospho-L-seryl-[protein] + ADP + H(+). It catalyses the reaction L-threonyl-[protein] + ATP = O-phospho-L-threonyl-[protein] + ADP + H(+). Activation requires multiple phosphorylation events on serine/threonine residues. Activation appears to be first mediated by phosphorylation of multiple sites in the autoinhibitory domain, which facilitates phosphorylation at Thr-412, disrupting the autoinhibitory mechanism and allowing phosphorylation of Thr-252 by PDPK1. The active conformation of the kinase is believed to be stabilized by a mechanism involving three conserved phosphorylation sites located in the kinase domain activation loop (Thr-252) and in the AGC-kinase C-terminal domain (Ser-394 in the middle of the tail/linker region and Thr-412 within a hydrophobic motif at its end). Activated by mTORC1; isoform Alpha I and isoform Alpha II are sensitive to rapamycin, which inhibits activating phosphorylation at Thr-412. Activated by PDPK1. Serine/threonine-protein kinase that acts downstream of mTOR signaling in response to growth factors and nutrients to promote cell proliferation, cell growth and cell cycle progression. Regulates protein synthesis through phosphorylation of EIF4B, RPS6 and EEF2K, and contributes to cell survival by repressing the pro-apoptotic function of BAD. Under conditions of nutrient depletion, the inactive form associates with the EIF3 translation initiation complex. Upon mitogenic stimulation, phosphorylation by the mechanistic target of rapamycin complex 1 (mTORC1) leads to dissociation from the EIF3 complex and activation. The active form then phosphorylates and activates several substrates in the pre-initiation complex, including the EIF2B complex and the cap-binding complex component EIF4B. Also controls translation initiation by phosphorylating a negative regulator of EIF4A, PDCD4, targeting it for ubiquitination and subsequent proteolysis. Promotes initiation of the pioneer round of protein synthesis by phosphorylating POLDIP3/SKAR. In response to IGF1, activates translation elongation by phosphorylating EEF2 kinase (EEF2K), which leads to its inhibition and thus activation of EEF2. Also plays a role in feedback regulation of mTORC2 by mTORC1 by phosphorylating MAPKAP1/SIN1, MTOR and RICTOR, resulting in the inhibition of mTORC2 and AKT1 signaling. Also involved in feedback regulation of mTORC1 and mTORC2 by phosphorylating DEPTOR. Mediates cell survival by phosphorylating the pro-apoptotic protein BAD and suppressing its pro-apoptotic function. Phosphorylates mitochondrial URI1 leading to dissociation of a URI1-PPP1CC complex. The free mitochondrial PPP1CC can then dephosphorylate RPS6KB1 at Thr-412, which is proposed to be a negative feedback mechanism for the RPS6KB1 anti-apoptotic function. Mediates TNF-alpha-induced insulin resistance by phosphorylating IRS1 at multiple serine residues, resulting in accelerated degradation of IRS1. In cells lacking functional TSC1-2 complex, constitutively phosphorylates and inhibits GSK3B. May be involved in cytoskeletal rearrangement through binding to neurabin. Phosphorylates and activates the pyrimidine biosynthesis enzyme CAD, downstream of MTOR. Following activation by mTORC1, phosphorylates EPRS and thereby plays a key role in fatty acid uptake by adipocytes and also most probably in interferon-gamma-induced translation inhibition. The chain is Ribosomal protein S6 kinase beta-1 (Rps6kb1) from Mus musculus (Mouse).